The sequence spans 126 residues: Large ribosomal subunit protein bL19 (126 aa).

This sequence belongs to the bacterial ribosomal protein bL19 family.

Its function is as follows. This protein is located at the 30S-50S ribosomal subunit interface and may play a role in the structure and function of the aminoacyl-tRNA binding site. This Paracoccus denitrificans (strain Pd 1222) protein is Large ribosomal subunit protein bL19.